We begin with the raw amino-acid sequence, 121 residues long: DNA-directed RNA polymerase subunit Rpo8 (121 aa).

Belongs to the archaeal Rpo8 RNA polymerase subunit family. As to quaternary structure, part of the 13-subunit RNA polymerase complex. In terms of processing, this subunit is phosphorylated.

It is found in the cytoplasm. The enzyme catalyses RNA(n) + a ribonucleoside 5'-triphosphate = RNA(n+1) + diphosphate. Functionally, DNA-dependent RNA polymerase (RNAP) catalyzes the transcription of DNA into RNA using the four ribonucleoside triphosphates as substrates. The polypeptide is DNA-directed RNA polymerase subunit Rpo8 (Sulfolobus acidocaldarius (strain ATCC 33909 / DSM 639 / JCM 8929 / NBRC 15157 / NCIMB 11770)).